A 1225-amino-acid polypeptide reads, in one-letter code: Hyphally regulated cell wall protein 4 (1225 aa).

The first 20 residues, 1–20, serve as a signal peptide directing secretion; that stretch reads MFSYSQAIRFIIFLLPICLT. N-linked (GlcNAc...) asparagine glycans are attached at residues N97, N200, N488, N595, N634, and N694. The interval 832 to 852 is disordered; sequence DLDLPDDTTFTPSQSSSTTVP. The segment covering 838-852 has biased composition (low complexity); sequence DTTFTPSQSSSTTVP. 2 N-linked (GlcNAc...) asparagine glycosylation sites follow: N933 and N1035. The interval 1049 to 1114 is disordered; sequence AYTQQDASTQ…NSHFEGTFIS (66 aa). N1133, N1150, N1182, and N1193 each carry an N-linked (GlcNAc...) asparagine glycan. S1195 carries the GPI-anchor amidated serine lipid modification. A propeptide spans 1196-1225 (removed in mature form); that stretch reads GLISKSESVVLLIRPVMIFVFLAICVVIML.

It belongs to the HYR1/IFF family. The GPI-anchor is attached to the protein in the endoplasmic reticulum and serves to target the protein to the cell surface. There, the glucosamine-inositol phospholipid moiety is cleaved off and the GPI-modified mannoprotein is covalently attached via its lipidless GPI glycan remnant to the 1,6-beta-glucan of the outer cell wall layer.

Its subcellular location is the secreted. It localises to the cell wall. It is found in the membrane. Functionally, GPI-anchored cell wall protein involved in cell wall organization, hyphal growth, as well as in host-fungal interaction and virulence. In Candida albicans (strain SC5314 / ATCC MYA-2876) (Yeast), this protein is Hyphally regulated cell wall protein 4 (HYR4).